We begin with the raw amino-acid sequence, 193 residues long: Xanthine phosphoribosyltransferase (193 aa).

Positions 20 and 27 each coordinate xanthine. 129–133 (ANGKA) lines the 5-phospho-alpha-D-ribose 1-diphosphate pocket. A xanthine-binding site is contributed by lysine 157.

The protein belongs to the purine/pyrimidine phosphoribosyltransferase family. Xpt subfamily. In terms of assembly, homodimer.

The protein resides in the cytoplasm. It catalyses the reaction XMP + diphosphate = xanthine + 5-phospho-alpha-D-ribose 1-diphosphate. It participates in purine metabolism; XMP biosynthesis via salvage pathway; XMP from xanthine: step 1/1. In terms of biological role, converts the preformed base xanthine, a product of nucleic acid breakdown, to xanthosine 5'-monophosphate (XMP), so it can be reused for RNA or DNA synthesis. This Bifidobacterium longum (strain NCC 2705) protein is Xanthine phosphoribosyltransferase.